The sequence spans 125 residues: uncharacterized protein (125 aa).

The tract at residues 36–57 (EAKKAKEKQDSKTKDTDKKVDQ) is disordered. The helical transmembrane segment at 92 to 112 (ITIFLLIVLVSAIMIGIYFGI) threads the bilayer.

The protein localises to the membrane. This is an uncharacterized protein from Mycoplasma pneumoniae (strain ATCC 29342 / M129 / Subtype 1) (Mycoplasmoides pneumoniae).